A 530-amino-acid chain; its full sequence is Na(+)/H(+) antiporter NhaB (530 aa).

12 consecutive transmembrane segments (helical) span residues 13-33, 34-54, 90-110, 121-141, 145-165, 205-225, 241-261, 306-326, 327-347, 351-371, 455-475, and 481-501; these read FLGK…VINP, LVFF…EFIF, LVAN…IYFM, ILIG…TAAF, FLDA…FYAI, LLIH…VGEP, FIIR…LTCI, GLIA…VGLI, GLSV…HSMG, EEAL…AVII, GQAA…QLSY, and MALP…IFFL.

The protein belongs to the NhaB Na(+)/H(+) (TC 2.A.34) antiporter family.

The protein resides in the cell inner membrane. It catalyses the reaction 2 Na(+)(in) + 3 H(+)(out) = 2 Na(+)(out) + 3 H(+)(in). Its function is as follows. Na(+)/H(+) antiporter that extrudes sodium in exchange for external protons. In Aliivibrio fischeri (strain MJ11) (Vibrio fischeri), this protein is Na(+)/H(+) antiporter NhaB.